We begin with the raw amino-acid sequence, 596 residues long: Estrogen receptor (596 aa).

The tract at residues 1–185 (MTMTLHTKAS…AMESAKETRY (185 aa)) is modulating (transactivation AF-1); mediates interaction with MACROD1. The O-linked (GlcNAc) serine glycan is linked to S10. The interval 36 to 48 (ERPLGEVYMDSSK) is required for interaction with NCOA1. Positions 36–175 (ERPLGEVYMD…LASTSDKGSM (140 aa)) are interaction with DDX5; self-association. Phosphoserine; by CDK2 is present on residues S104 and S106. At S119 the chain carries Phosphoserine. The tract at residues 144–175 (EAGPPAYYRPNSDNRRQGGRERLASTSDKGSM) is disordered. The segment covering 155 to 166 (SDNRRQGGRERL) has biased composition (basic and acidic residues). A Phosphoserine; by CK2 modification is found at S168. 2 consecutive NR C4-type zinc fingers follow at residues 186 to 206 (CAVC…CEGC) and 222 to 246 (CPAT…LRKC). Positions 186-251 (CAVCNDYASG…RLRKCYEVGM (66 aa)) form a DNA-binding region, nuclear receptor. The segment at 186–311 (CAVCNDYASG…TKKNSPVLSL (126 aa)) is mediates interaction with DNTTIP2. The hinge stretch occupies residues 252-311 (MKGGIRKDRRGGRMLKHKRQRDDGEGRNEAVPSGDMRAANLWPSPIMIKHTKKNSPVLSL). The segment covering 259–270 (DRRGGRMLKHKR) has biased composition (basic residues). The tract at residues 259 to 285 (DRRGGRMLKHKRQRDDGEGRNEAVPSG) is disordered. R261 carries the post-translational modification Asymmetric dimethylarginine; by PRMT1. Residues 263 to 596 (GRMLKHKRQR…GEAENFPSTV (334 aa)) form an interaction with AKAP13 region. A self-association region spans residues 265 to 595 (MLKHKRQRDD…TGEAENFPST (331 aa)). An NR LBD domain is found at 312–548 (TADQMISALL…DLLLEMLDAH (237 aa)). The tract at residues 312–595 (TADQMISALL…TGEAENFPST (284 aa)) is transactivation AF-2. Residues E354 and R395 each contribute to the 17beta-estradiol site. C448 carries S-palmitoyl cysteine lipidation. Residue H525 coordinates 17beta-estradiol. At Y538 the chain carries Phosphotyrosine; by Tyr-kinases. A glycan (O-linked (GlcNAc) threonine) is linked at T572.

The protein belongs to the nuclear hormone receptor family. NR3 subfamily. In terms of assembly, binds DNA as a homodimer. Can form a heterodimer with ESR2. Interacts with coactivator NCOA5. Interacts with PELP1, the interaction is enhanced by 17-beta-estradiol; the interaction increases ESR1 transcriptional activity. Interacts with NCOA7; the interaction is ligand-inducible. Interacts with AKAP13, CUEDC2, HEXIM1, KDM5A, MAP1S, SMARD1, and UBE1C. Interacts with MUC1; the interaction is stimulated by 7 beta-estradiol (E2) and enhances ESR1-mediated transcription. Interacts with DNTTIP2, and UIMC1. Interacts with KMT2D/MLL2. Interacts with ATAD2; the interaction is enhanced by estradiol. Interacts with KIF18A and LDB1. Interacts with RLIM (via its C-terminus). Interacts with MACROD1. Interacts with SH2D4A and PLCG. Interacts with SH2D4A; the interaction blocks binding to PLCG and inhibits estrogen-induced cell proliferation. Interacts with DYNLL1. Interacts with CCDC62; the interaction requires estradiol and appears to enhance the transcription of target genes. Interacts with NR2C1; the interaction prevents homodimerization of ESR1 and suppresses its transcriptional activity and cell growth. Interacts with DNAAF4. Interacts with PRMT2. Interacts with RBFOX2. Interacts with EP300; the interaction is estrogen-dependent and enhanced by CITED1. Interacts with CITED1; the interaction is estrogen-dependent. Interacts with FAM120B, FOXL2, PHB2 and SLC30A9. Interacts with coactivators NCOA3 and NCOA6. Interacts with STK3/MST2 only in the presence of SAV1 and vice-versa. Binds to CSNK1D. Interacts with NCOA2; NCOA2 can interact with ESR1 AF-1 and AF-2 domains simultaneously and mediate their transcriptional synergy. Interacts with DDX5. Interacts with NCOA1; the interaction seems to require a self-association of N-terminal and C-terminal regions. Interacts with ZNF366, DDX17, NFKB1, RELA, SP1 and SP3. Interacts with NRIP1. Interacts with GPER1; the interaction occurs in an estrogen-dependent manner. Interacts with CLOCK and the interaction is stimulated by estrogen. Interacts with TRIP4 (ufmylated); estrogen dependent. Interacts with LMTK3; the interaction phosphorylates ESR1 (in vitro) and protects it against proteasomal degradation. Interacts with CCAR2 (via N-terminus) in a ligand-independent manner. Interacts with ZFHX3. Interacts with SFR1 in a ligand-dependent and -independent manner. Interacts with DCAF13, LATS1 and DCAF1; regulates ESR1 ubiquitination and ubiquitin-mediated proteasomal degradation. Interacts (via DNA-binding domain) with POU4F2 (C-terminus); this interaction increases the estrogen receptor ESR1 transcriptional activity in a DNA- and ligand 17-beta-estradiol-independent manner. Interacts with ESRRB isoform 1. Interacts with UBE3A and WBP2. Interacts with GTF2B. Interacts with RBM39. In the absence of hormonal ligand, interacts with TACC1. Interacts with PI3KR1 or PI3KR2 and PTK2/FAK1. Interacts with SRC. Interacts with BAG1; the interaction is promoted in the absence of estradiol (17-beta-estradiol/E2). Interacts with and ubiquitinated by STUB1; the interaction is promoted in the absence of estradiol (17-beta-estradiol/E2). Interacts with NEDD8. In terms of processing, glycosylated; contains N-acetylglucosamine, probably O-linked. Ubiquitinated; regulated by LATS1 via DCAF1 it leads to ESR1 proteasomal degradation. Deubiquitinated by OTUB1. Ubiquitinated by STUB1/CHIP; in the CA1 hippocampal region following loss of endogenous circulating estradiol (17-beta-estradiol/E2). Ubiquitinated by UBR5, leading to its degradation: UBR5 specifically recognizes and binds ligand-bound ESR1 when it is not associated with coactivators (NCOAs). In presence of NCOAs, the UBR5-degron is not accessible, preventing its ubiquitination and degradation. Post-translationally, phosphorylated by cyclin A/CDK2 and CK1. Phosphorylation probably enhances transcriptional activity. Dephosphorylation at Ser-119 by PPP5C inhibits its transactivation activity. Phosphorylated by LMTK3 (in vitro). In terms of processing, palmitoylated at Cys-448 by ZDHHC7 and ZDHHC21. Palmitoylation is required for plasma membrane targeting and for rapid intracellular signaling via ERK and AKT kinases and cAMP generation, but not for signaling mediated by the nuclear hormone receptor. Dimethylated by PRMT1 at Arg-261. The methylation may favor cytoplasmic localization. Demethylated by JMJD6 at Arg-261.

The protein resides in the nucleus. It is found in the cytoplasm. The protein localises to the golgi apparatus. Its subcellular location is the cell membrane. Functionally, nuclear hormone receptor. The steroid hormones and their receptors are involved in the regulation of eukaryotic gene expression and affect cellular proliferation and differentiation in target tissues. Ligand-dependent nuclear transactivation involves either direct homodimer binding to a palindromic estrogen response element (ERE) sequence or association with other DNA-binding transcription factors, such as AP-1/c-Jun, c-Fos, ATF-2, Sp1 and Sp3, to mediate ERE-independent signaling. Ligand binding induces a conformational change allowing subsequent or combinatorial association with multiprotein coactivator complexes through LXXLL motifs of their respective components. Mutual transrepression occurs between the estrogen receptor (ER) and NF-kappa-B in a cell-type specific manner. Decreases NF-kappa-B DNA-binding activity and inhibits NF-kappa-B-mediated transcription from the IL6 promoter and displace RELA/p65 and associated coregulators from the promoter. Recruited to the NF-kappa-B response element of the CCL2 and IL8 promoters and can displace CREBBP. Present with NF-kappa-B components RELA/p65 and NFKB1/p50 on ERE sequences. Can also act synergistically with NF-kappa-B to activate transcription involving respective recruitment adjacent response elements; the function involves CREBBP. Can activate the transcriptional activity of TFF1. Also mediates membrane-initiated estrogen signaling involving various kinase cascades. Essential for MTA1-mediated transcriptional regulation of BRCA1 and BCAS3. Maintains neuronal survival in response to ischemic reperfusion injury when in the presence of circulating estradiol (17-beta-estradiol/E2). This Bos taurus (Bovine) protein is Estrogen receptor (ESR1).